A 141-amino-acid polypeptide reads, in one-letter code: Keratin-associated protein 19-2 (141 aa).

Residues 5–135 are 48 X 2 AA repeats of G-[YCGS]; that stretch reads SGYSGGLGYG…CRRSSCCGGY (131 aa).

It belongs to the KRTAP type 19 family. Interacts with hair keratins. In terms of tissue distribution, strong expression in narrowly defined pattern restricted to the lower and middle cortical regions of the hair shaft in both developing and cycling hair. During hair follicle regression (catagen), expression levels decrease until expression is no longer detectable in follicles at resting stage (telogen).

In the hair cortex, hair keratin intermediate filaments are embedded in an interfilamentous matrix, consisting of hair keratin-associated proteins (KRTAP), which are essential for the formation of a rigid and resistant hair shaft through their extensive disulfide bond cross-linking with abundant cysteine residues of hair keratins. The matrix proteins include the high-sulfur and high-glycine-tyrosine keratins. The polypeptide is Keratin-associated protein 19-2 (Krtap19-2) (Mus musculus (Mouse)).